A 118-amino-acid chain; its full sequence is Large ribosomal subunit protein uL24 (118 aa).

Belongs to the universal ribosomal protein uL24 family. In terms of assembly, part of the 50S ribosomal subunit.

Functionally, one of two assembly initiator proteins, it binds directly to the 5'-end of the 23S rRNA, where it nucleates assembly of the 50S subunit. In terms of biological role, one of the proteins that surrounds the polypeptide exit tunnel on the outside of the subunit. The protein is Large ribosomal subunit protein uL24 of Prochlorococcus marinus (strain AS9601).